A 337-amino-acid polypeptide reads, in one-letter code: Methylthioribose-1-phosphate isomerase (337 aa).

Residues 47–49 (RGA), Arg-81, and Gln-184 contribute to the substrate site. The active-site Proton donor is Asp-225. Position 235–236 (235–236 (NK)) interacts with substrate.

Belongs to the eIF-2B alpha/beta/delta subunits family. MtnA subfamily.

It catalyses the reaction 5-(methylsulfanyl)-alpha-D-ribose 1-phosphate = 5-(methylsulfanyl)-D-ribulose 1-phosphate. It participates in amino-acid biosynthesis; L-methionine biosynthesis via salvage pathway; L-methionine from S-methyl-5-thio-alpha-D-ribose 1-phosphate: step 1/6. In terms of biological role, catalyzes the interconversion of methylthioribose-1-phosphate (MTR-1-P) into methylthioribulose-1-phosphate (MTRu-1-P). This is Methylthioribose-1-phosphate isomerase from Parasynechococcus marenigrum (strain WH8102).